The sequence spans 147 residues: Protein archease (147 aa).

Ca(2+)-binding residues include Asp-17, Asp-146, and Val-147.

It belongs to the archease family.

Activates the tRNA-splicing ligase complex by facilitating the enzymatic turnover of catalytic subunit RtcB. Acts by promoting the guanylylation of RtcB, a key intermediate step in tRNA ligation. Can also alter the NTP specificity of RtcB such that ATP, dGTP or ITP is used efficiently. In Pyrobaculum islandicum (strain DSM 4184 / JCM 9189 / GEO3), this protein is Protein archease.